The sequence spans 185 residues: Elongation factor P (185 aa).

This sequence belongs to the elongation factor P family.

It is found in the cytoplasm. It functions in the pathway protein biosynthesis; polypeptide chain elongation. Functionally, involved in peptide bond synthesis. Stimulates efficient translation and peptide-bond synthesis on native or reconstituted 70S ribosomes in vitro. Probably functions indirectly by altering the affinity of the ribosome for aminoacyl-tRNA, thus increasing their reactivity as acceptors for peptidyl transferase. This is Elongation factor P from Paraburkholderia xenovorans (strain LB400).